The chain runs to 204 residues: Large ribosomal subunit protein bL17 (204 aa).

Positions 124–204 (QAVGEAERAR…DDDGPAESKS (81 aa)) are disordered. Residues 128-142 (EAERARGTRFSERRK) show a composition bias toward basic and acidic residues. Over residues 156–191 (SESPTAAAVAAQSAEEQAPVEETLTAQAAETSAATV) the composition is skewed to low complexity. Positions 192–204 (EETDDDGPAESKS) are enriched in acidic residues.

It belongs to the bacterial ribosomal protein bL17 family. In terms of assembly, part of the 50S ribosomal subunit. Contacts protein L32.

The chain is Large ribosomal subunit protein bL17 from Frankia alni (strain DSM 45986 / CECT 9034 / ACN14a).